A 449-amino-acid chain; its full sequence is Signal recognition particle protein (449 aa).

Residues 109-116 (GLQGSGKT), 191-195 (DTAGR), and 249-252 (SRID) each bind GTP.

The protein belongs to the GTP-binding SRP family. SRP54 subfamily. As to quaternary structure, part of the signal recognition particle protein translocation system, which is composed of SRP and FtsY. SRP is a ribonucleoprotein composed of Ffh and a 4.5S RNA molecule.

The protein localises to the cytoplasm. The enzyme catalyses GTP + H2O = GDP + phosphate + H(+). Functionally, involved in targeting and insertion of nascent membrane proteins into the cytoplasmic membrane. Binds to the hydrophobic signal sequence of the ribosome-nascent chain (RNC) as it emerges from the ribosomes. The SRP-RNC complex is then targeted to the cytoplasmic membrane where it interacts with the SRP receptor FtsY. Interaction with FtsY leads to the transfer of the RNC complex to the Sec translocase for insertion into the membrane, the hydrolysis of GTP by both Ffh and FtsY, and the dissociation of the SRP-FtsY complex into the individual components. This Rickettsia felis (strain ATCC VR-1525 / URRWXCal2) (Rickettsia azadi) protein is Signal recognition particle protein.